The chain runs to 453 residues: tRNA modification GTPase MnmE (453 aa).

Residues Arg-22, Glu-79, and Lys-119 each coordinate (6S)-5-formyl-5,6,7,8-tetrahydrofolate. Positions 215–376 (GMKVVIAGRP…LKAHLKSLMG (162 aa)) constitute a TrmE-type G domain. Residue Asn-225 coordinates K(+). Residues 225 to 230 (NAGKSS), 244 to 250 (TEIAGTT), 269 to 272 (DTAG), and 334 to 337 (NKAD) each bind GTP. Ser-229 is a binding site for Mg(2+). The K(+) site is built by Thr-244, Ile-246, and Thr-249. Thr-250 is a binding site for Mg(2+). (6S)-5-formyl-5,6,7,8-tetrahydrofolate is bound at residue Lys-453.

The protein belongs to the TRAFAC class TrmE-Era-EngA-EngB-Septin-like GTPase superfamily. TrmE GTPase family. In terms of assembly, homodimer. Heterotetramer of two MnmE and two MnmG subunits. The cofactor is K(+).

The protein resides in the cytoplasm. Its function is as follows. Exhibits a very high intrinsic GTPase hydrolysis rate. Involved in the addition of a carboxymethylaminomethyl (cmnm) group at the wobble position (U34) of certain tRNAs, forming tRNA-cmnm(5)s(2)U34. The sequence is that of tRNA modification GTPase MnmE from Shewanella loihica (strain ATCC BAA-1088 / PV-4).